A 91-amino-acid polypeptide reads, in one-letter code: Putative regulatory protein Tlet_1629 (91 aa).

Belongs to the RemA family.

The protein is Putative regulatory protein Tlet_1629 of Pseudothermotoga lettingae (strain ATCC BAA-301 / DSM 14385 / NBRC 107922 / TMO) (Thermotoga lettingae).